Consider the following 311-residue polypeptide: Ornithine carbamoyltransferase (311 aa).

Carbamoyl phosphate-binding positions include 52-55 (STRT), Gln79, Arg103, and 129-132 (HPVQ). L-ornithine contacts are provided by residues Asn167, Asp226, and 230–231 (SM). Carbamoyl phosphate contacts are provided by residues 266–267 (CL) and Arg294.

It belongs to the aspartate/ornithine carbamoyltransferase superfamily. OTCase family.

The protein resides in the cytoplasm. It catalyses the reaction carbamoyl phosphate + L-ornithine = L-citrulline + phosphate + H(+). It functions in the pathway amino-acid biosynthesis; L-arginine biosynthesis; L-arginine from L-ornithine and carbamoyl phosphate: step 1/3. Functionally, reversibly catalyzes the transfer of the carbamoyl group from carbamoyl phosphate (CP) to the N(epsilon) atom of ornithine (ORN) to produce L-citrulline. The protein is Ornithine carbamoyltransferase of Sorangium cellulosum (strain So ce56) (Polyangium cellulosum (strain So ce56)).